The primary structure comprises 461 residues: Inositol-trisphosphate 3-kinase A (461 aa).

Positions 1 to 29 are disordered; sequence MTLPGGPTGMARPGGARPCSPGLERAPRR. A required for cytoskeleton location region spans residues 1 to 133; that stretch reads MTLPGGPTGM…SVSSTGSSSL (133 aa). An omega-N-methylarginine mark is found at arginine 35, arginine 55, and arginine 62. The interval 49 to 160 is disordered; that stretch reads AAAGEPRARG…GNVQLEAGED (112 aa). Residues 118–134 are compositionally biased toward low complexity; sequence RRLSTSSVSSTGSSSLL. 2 positions are modified to phosphoserine: serine 137 and serine 197. ATP is bound by residues serine 197, lysine 209, 249–251, and aspartate 262; that span reads QDL. Residues lysine 264 and arginine 285 each coordinate substrate. A calmodulin-binding region spans residues 287–295; that stretch reads DMYKKMLAV. Substrate is bound at residue 312-319; the sequence is KPRYMQWR. ATP-binding residues include lysine 336 and aspartate 416. Lysine 419 provides a ligand contact to substrate.

This sequence belongs to the inositol phosphokinase (IPK) family. As to expression, expressed in brain.

The protein localises to the cytoplasm. It is found in the cytoskeleton. It carries out the reaction 1D-myo-inositol 1,4,5-trisphosphate + ATP = 1D-myo-inositol 1,3,4,5-tetrakisphosphate + ADP + H(+). Activated by calcium/calmodulin. In terms of biological role, catalyzes the phosphorylation of 1D-myo-inositol 1,4,5-trisphosphate (InsP3) into 1D-myo-inositol 1,3,4,5-tetrakisphosphate and participates to the regulation of calcium homeostasis. The polypeptide is Inositol-trisphosphate 3-kinase A (Homo sapiens (Human)).